Reading from the N-terminus, the 336-residue chain is Acyl-CoA-binding domain-containing protein 4 (336 aa).

A helical; Signal-anchor membrane pass occupies residues 12-32; sequence AVIGLLFAFLVAKLISTVIAF. Residues 40-88 are disordered; that stretch reads TRSTPTSPSAADTPAAPAPPPASLDGGHGDTSDGSGSDSDSDWEGVEST. A compositionally biased stretch (low complexity) spans 42-54; it reads STPTSPSAADTPA. Positions 78-88 are enriched in acidic residues; the sequence is SDSDWEGVEST. The 89-residue stretch at 90–178 folds into the ACB domain; it reads LDEEFSAASA…VDELFPNWSM (89 aa). Residues 120 to 124, Lys142, Lys146, and Tyr165 each bind an acyl-CoA; that span reads YGLYK. Residue Asn175 is glycosylated (N-linked (GlcNAc...) asparagine). The tract at residues 179 to 202 is disordered; it reads GSSTKRKDEDTTVSASSSKGPMGP. Asn216 carries N-linked (GlcNAc...) asparagine glycosylation. ANK repeat units lie at residues 251 to 280 and 284 to 313; these read EGRTPLHWAVDRGHLNSVEILVNANADVNA and EGQTALHYAVLCEREDIAELLVKHHADVQI.

Belongs to the ACBP family. As to expression, highly expressed in leaves. Expressed at low levels in roots and seeds.

Its subcellular location is the endoplasmic reticulum membrane. Functionally, binds medium- and long-chain acyl-CoA esters with high affinity. Can interact in vitro with palmitoyl-CoA, linoleoyl-CoA and linolenoyl-CoA. Binds phosphatidic acid (PA) and phosphatidylcholine (PC) in vitro. May play a role in the biosynthesis of phospholipids. The protein is Acyl-CoA-binding domain-containing protein 4 of Oryza sativa subsp. japonica (Rice).